The sequence spans 1010 residues: Sodium/potassium-transporting ATPase subunit alpha-3 (1010 aa).

The segment at 1–21 (MGDKGEKESPKKGKGKRDLDD) is disordered. Over 1–74 (MGDKGEKESP…NALTPPPTTP (74 aa)) the chain is Cytoplasmic. An interaction with phosphoinositide-3 kinase region spans residues 69–71 (PPP). The chain crosses the membrane as a helical span at residues 75-95 (EWVKFCRQLFGGFSILLWIGA). Over 96–118 (ILCFLAYGIQAGTEDEPSNDNLY) the chain is Extracellular. Residues 119 to 139 (LGIVLAAVVIITGCFSYYQEA) traverse the membrane as a helical segment. Over 140–275 (KSSKIMESFK…VGKTPIAVEI (136 aa)) the chain is Cytoplasmic. Residues 276 to 295 (EHFIQLITGVAVFLGISFFV) traverse the membrane as a helical segment. The Extracellular segment spans residues 296-307 (LSLILGYTWLEA). The helical transmembrane segment at 308–325 (VIFLIGIIVANVPEGLLA) threads the bilayer. Residues 326 to 759 (TVTVCLTLTA…EEGRLIFDNL (434 aa)) lie on the Cytoplasmic side of the membrane. The active-site 4-aspartylphosphate intermediate is the Asp363. Positions 704 and 708 each coordinate Mg(2+). Residues 760–779 (KKSIAYTLTSNIPEITPFLL) form a helical membrane-spanning segment. The Extracellular segment spans residues 780 to 789 (FIMANIPLPL). The chain crosses the membrane as a helical span at residues 790 to 810 (GTITILCIDLGTDMVPAISLA). The Cytoplasmic portion of the chain corresponds to 811 to 830 (YEAAESDIMKRQPRNPRSDK). Residues 831-853 (LVNERLISMAYGQIGMIQALGGF) form a helical membrane-spanning segment. Over 854–905 (FSYFVILAENGFLPSCLVGIRLSWDDRTINDLEDSYGQQWTYEQRKVVEFTC) the chain is Extracellular. The helical transmembrane segment at 906–925 (HTAFFVSIVVVQWADLIICK) threads the bilayer. The Cytoplasmic segment spans residues 926 to 938 (TRRNSVFQQGMKN). The residue at position 930 (Ser930) is a Phosphoserine; by PKA. A helical transmembrane segment spans residues 939-957 (KILIFGLFEETALAAFLSY). The Extracellular portion of the chain corresponds to 958–972 (CPGMDVALRMYPLKP). Residues 973–993 (SWWFCAFPYSFLIFVYDEIRK) form a helical membrane-spanning segment. Residues 994–1010 (LILRRNPGGWVEKETYY) lie on the Cytoplasmic side of the membrane.

It belongs to the cation transport ATPase (P-type) (TC 3.A.3) family. Type IIC subfamily. The sodium/potassium-transporting ATPase is composed of a catalytic alpha subunit, an auxiliary non-catalytic beta subunit and an additional regulatory subunit.

The protein localises to the cell membrane. It carries out the reaction K(+)(out) + Na(+)(in) + ATP + H2O = K(+)(in) + Na(+)(out) + ADP + phosphate + H(+). Its function is as follows. This is the catalytic component of the active enzyme, which catalyzes the hydrolysis of ATP coupled with the exchange of sodium and potassium ions across the plasma membrane. This action creates the electrochemical gradient of sodium and potassium ions, providing the energy for active transport of various nutrients. The polypeptide is Sodium/potassium-transporting ATPase subunit alpha-3 (ATP1A3) (Gallus gallus (Chicken)).